A 321-amino-acid chain; its full sequence is Holliday junction branch migration complex subunit RuvB (321 aa).

Residues 1–173 (MMMEQECVDD…FGIISRLEFY (173 aa)) form a large ATPase domain (RuvB-L) region. ATP is bound by residues Ile-12, Arg-13, Gly-54, Lys-57, Thr-58, Thr-59, 120–122 (EDF), Arg-163, Tyr-173, and Arg-210. Position 58 (Thr-58) interacts with Mg(2+). Residues 174–244 (TPAELACIVK…LASDALARMD (71 aa)) form a small ATPAse domain (RuvB-S) region. Residues 247 to 321 (ELGLDQMDRK…KAYRHMNLLA (75 aa)) are head domain (RuvB-H). Residues Arg-302 and Arg-307 each contribute to the DNA site.

Belongs to the RuvB family. As to quaternary structure, homohexamer. Forms an RuvA(8)-RuvB(12)-Holliday junction (HJ) complex. HJ DNA is sandwiched between 2 RuvA tetramers; dsDNA enters through RuvA and exits via RuvB. An RuvB hexamer assembles on each DNA strand where it exits the tetramer. Each RuvB hexamer is contacted by two RuvA subunits (via domain III) on 2 adjacent RuvB subunits; this complex drives branch migration. In the full resolvosome a probable DNA-RuvA(4)-RuvB(12)-RuvC(2) complex forms which resolves the HJ.

It is found in the cytoplasm. It carries out the reaction ATP + H2O = ADP + phosphate + H(+). Functionally, the RuvA-RuvB-RuvC complex processes Holliday junction (HJ) DNA during genetic recombination and DNA repair, while the RuvA-RuvB complex plays an important role in the rescue of blocked DNA replication forks via replication fork reversal (RFR). RuvA specifically binds to HJ cruciform DNA, conferring on it an open structure. The RuvB hexamer acts as an ATP-dependent pump, pulling dsDNA into and through the RuvAB complex. RuvB forms 2 homohexamers on either side of HJ DNA bound by 1 or 2 RuvA tetramers; 4 subunits per hexamer contact DNA at a time. Coordinated motions by a converter formed by DNA-disengaged RuvB subunits stimulates ATP hydrolysis and nucleotide exchange. Immobilization of the converter enables RuvB to convert the ATP-contained energy into a lever motion, pulling 2 nucleotides of DNA out of the RuvA tetramer per ATP hydrolyzed, thus driving DNA branch migration. The RuvB motors rotate together with the DNA substrate, which together with the progressing nucleotide cycle form the mechanistic basis for DNA recombination by continuous HJ branch migration. Branch migration allows RuvC to scan DNA until it finds its consensus sequence, where it cleaves and resolves cruciform DNA. The sequence is that of Holliday junction branch migration complex subunit RuvB from Oleidesulfovibrio alaskensis (strain ATCC BAA-1058 / DSM 17464 / G20) (Desulfovibrio alaskensis).